Reading from the N-terminus, the 309-residue chain is Glutaminase (309 aa).

Substrate is bound by residues S64, N114, E160, N167, Y191, Y243, and V261.

Belongs to the glutaminase family. As to quaternary structure, homotetramer.

The enzyme catalyses L-glutamine + H2O = L-glutamate + NH4(+). In Methylorubrum extorquens (strain PA1) (Methylobacterium extorquens), this protein is Glutaminase.